The primary structure comprises 155 residues: Small ribosomal subunit protein bS6 (155 aa).

Residues 94 to 155 (VKQEGPLPTP…TPELEEQVKS (62 aa)) form a disordered region. Residues 103–112 (PRSSNKSSNQ) are compositionally biased toward polar residues. Over residues 113-141 (AEKKENENIDSANKSEPKADETDNKKKIT) the composition is skewed to basic and acidic residues.

It belongs to the bacterial ribosomal protein bS6 family.

Functionally, binds together with bS18 to 16S ribosomal RNA. The chain is Small ribosomal subunit protein bS6 from Prochlorococcus marinus (strain MIT 9515).